The following is a 337-amino-acid chain: DNA-directed RNA polymerase subunit alpha (337 aa).

The segment at 1–233 is alpha N-terminal domain (alpha-NTD); the sequence is MVREEVAGST…DLFLPFLHTE (233 aa). The alpha C-terminal domain (alpha-CTD) stretch occupies residues 267-337; it reads IPLNCIFIDQ…LPMDLPKNKF (71 aa).

Belongs to the RNA polymerase alpha chain family. In plastids the minimal PEP RNA polymerase catalytic core is composed of four subunits: alpha, beta, beta', and beta''. When a (nuclear-encoded) sigma factor is associated with the core the holoenzyme is formed, which can initiate transcription.

The protein localises to the plastid. It localises to the chloroplast. The enzyme catalyses RNA(n) + a ribonucleoside 5'-triphosphate = RNA(n+1) + diphosphate. Its function is as follows. DNA-dependent RNA polymerase catalyzes the transcription of DNA into RNA using the four ribonucleoside triphosphates as substrates. This Oryza nivara (Indian wild rice) protein is DNA-directed RNA polymerase subunit alpha.